A 548-amino-acid chain; its full sequence is Eukaryotic translation initiation factor 3 subunit D (548 aa).

Lys-53 is subject to N6-acetyllysine. Position 161 is a phosphoserine (Ser-161). Positions 285-299 (DFDLPTVSETANEPP) are RNA gate. Disordered stretches follow at residues 288–309 (LPTV…FNSP) and 523–548 (PDGT…EEET). Residues 291-309 (VSETANEPPQDEGNSFNSP) are compositionally biased toward polar residues. Residues Ser-528 and Ser-529 each carry the phosphoserine modification. The segment covering 529–548 (SDEDEEEEEEEEEEEEEEET) has biased composition (acidic residues).

It belongs to the eIF-3 subunit D family. In terms of assembly, component of the eukaryotic translation initiation factor 3 (eIF-3) complex, which is composed of 13 subunits: EIF3A, EIF3B, EIF3C, EIF3D, EIF3E, EIF3F, EIF3G, EIF3H, EIF3I, EIF3J, EIF3K, EIF3L and EIF3M. The eIF-3 complex appears to include 3 stable modules: module A is composed of EIF3A, EIF3B, EIF3G and EIF3I; module B is composed of EIF3F, EIF3H, and EIF3M; and module C is composed of EIF3C, EIF3D, EIF3E, EIF3K and EIF3L. EIF3C of module C binds EIF3B of module A and EIF3H of module B, thereby linking the three modules. EIF3J is a labile subunit that binds to the eIF-3 complex via EIF3B. The eIF-3 complex interacts with RPS6KB1 under conditions of nutrient depletion. Mitogenic stimulation leads to binding and activation of a complex composed of MTOR and RPTOR, leading to phosphorylation and release of RPS6KB1 and binding of EIF4B to eIF-3.

It is found in the cytoplasm. Functionally, mRNA cap-binding component of the eukaryotic translation initiation factor 3 (eIF-3) complex, a complex required for several steps in the initiation of protein synthesis of a specialized repertoire of mRNAs. The eIF-3 complex associates with the 40S ribosome and facilitates the recruitment of eIF-1, eIF-1A, eIF-2:GTP:methionyl-tRNAi and eIF-5 to form the 43S pre-initiation complex (43S PIC). The eIF-3 complex stimulates mRNA recruitment to the 43S PIC and scanning of the mRNA for AUG recognition. The eIF-3 complex is also required for disassembly and recycling of post-termination ribosomal complexes and subsequently prevents premature joining of the 40S and 60S ribosomal subunits prior to initiation. The eIF-3 complex specifically targets and initiates translation of a subset of mRNAs involved in cell proliferation, including cell cycling, differentiation and apoptosis, and uses different modes of RNA stem-loop binding to exert either translational activation or repression. In the eIF-3 complex, EIF3D specifically recognizes and binds the 7-methylguanosine cap of a subset of mRNAs. The sequence is that of Eukaryotic translation initiation factor 3 subunit D from Pongo abelii (Sumatran orangutan).